A 539-amino-acid polypeptide reads, in one-letter code: Chaperonin GroEL (539 aa).

Residues 29-32 (TLGP), 86-90 (DGTTT), glycine 413, and aspartate 492 each bind ATP.

Belongs to the chaperonin (HSP60) family. In terms of assembly, forms a cylinder of 14 subunits composed of two heptameric rings stacked back-to-back. Interacts with the co-chaperonin GroES.

It localises to the cytoplasm. It catalyses the reaction ATP + H2O + a folded polypeptide = ADP + phosphate + an unfolded polypeptide.. In terms of biological role, together with its co-chaperonin GroES, plays an essential role in assisting protein folding. The GroEL-GroES system forms a nano-cage that allows encapsulation of the non-native substrate proteins and provides a physical environment optimized to promote and accelerate protein folding. This Fusobacterium nucleatum subsp. nucleatum (strain ATCC 25586 / DSM 15643 / BCRC 10681 / CIP 101130 / JCM 8532 / KCTC 2640 / LMG 13131 / VPI 4355) protein is Chaperonin GroEL.